The chain runs to 461 residues: Photosystem II CP43 reaction center protein (461 aa).

A propeptide spanning residues 1–2 is cleaved from the precursor; the sequence is ME. An N-acetylthreonine modification is found at Thr-3. A Phosphothreonine modification is found at Thr-3. 5 helical membrane passes run 57–81, 122–143, 166–188, 243–263, and 279–300; these read LFEV…PHLA, LIGP…KDKS, KSVY…RKIT, KPFA…LSYS, and WFNN…ASQA. Glu-355 contacts [CaMn4O5] cluster. A helical membrane pass occupies residues 435 to 459; the sequence is RARAAAAGFEKGIDRDTEPVLSMTP.

It belongs to the PsbB/PsbC family. PsbC subfamily. PSII is composed of 1 copy each of membrane proteins PsbA, PsbB, PsbC, PsbD, PsbE, PsbF, PsbH, PsbI, PsbJ, PsbK, PsbL, PsbM, PsbT, PsbX, PsbY, PsbZ, Psb30/Ycf12, at least 3 peripheral proteins of the oxygen-evolving complex and a large number of cofactors. It forms dimeric complexes. Requires Binds multiple chlorophylls and provides some of the ligands for the Ca-4Mn-5O cluster of the oxygen-evolving complex. It may also provide a ligand for a Cl- that is required for oxygen evolution. PSII binds additional chlorophylls, carotenoids and specific lipids. as cofactor.

It is found in the plastid. The protein resides in the chloroplast thylakoid membrane. Its function is as follows. One of the components of the core complex of photosystem II (PSII). It binds chlorophyll and helps catalyze the primary light-induced photochemical processes of PSII. PSII is a light-driven water:plastoquinone oxidoreductase, using light energy to abstract electrons from H(2)O, generating O(2) and a proton gradient subsequently used for ATP formation. The sequence is that of Photosystem II CP43 reaction center protein from Psilotum nudum (Whisk fern).